Reading from the N-terminus, the 179-residue chain is Deoxyuridine 5'-triphosphate nucleotidohydrolase, mitochondrial (179 aa).

Residues 1–41 constitute a mitochondrion transit peptide; the sequence is MPIEQKYFSLFSNLFKRLTTNNNNNNYLKMAPPNFETFKVK. Residues 97–99, 111–114, Gly122, Arg165, and 170–171 contribute to the dUTP site; these read RSG, GVID, and FG.

This sequence belongs to the dUTPase family. As to quaternary structure, homotrimer. Mg(2+) is required as a cofactor.

Its subcellular location is the mitochondrion. The enzyme catalyses dUTP + H2O = dUMP + diphosphate + H(+). Its pathway is pyrimidine metabolism; dUMP biosynthesis; dUMP from dCTP (dUTP route): step 2/2. Functionally, this enzyme is involved in nucleotide metabolism: it produces dUMP, the immediate precursor of thymidine nucleotides and it decreases the intracellular concentration of dUTP so that uracil cannot be incorporated into DNA. In Dictyostelium discoideum (Social amoeba), this protein is Deoxyuridine 5'-triphosphate nucleotidohydrolase, mitochondrial (dut).